Here is a 233-residue protein sequence, read N- to C-terminus: Small ribosomal subunit protein uS2 (233 aa).

This sequence belongs to the universal ribosomal protein uS2 family.

This Clostridium beijerinckii (strain ATCC 51743 / NCIMB 8052) (Clostridium acetobutylicum) protein is Small ribosomal subunit protein uS2.